We begin with the raw amino-acid sequence, 518 residues long: Reduced folate transporter (518 aa).

An N-acetylmethionine modification is found at Met-1. Topologically, residues 1–29 (MVPTGQVAEKQACEEPRQDRELKSWRCLV) are cytoplasmic. Residues 30–50 (FYLCFFGFMAQLRPGESFITP) traverse the membrane as a helical segment. The folate site is built by Ile-48 and Thr-49. Residues 51–62 (YLLQQNFTIEQV) lie on the Extracellular side of the membrane. N-linked (GlcNAc...) asparagine glycosylation is present at Asn-56. A helical membrane pass occupies residues 63-85 (TNEIIPVLPYSHLAVLVPIFLLT). The Cytoplasmic segment spans residues 86 to 89 (DYLR). Residues 90-110 (YKPILILQCLSFMCVWLLLLL) form a helical membrane-spanning segment. At 111–114 (GTSV) the chain is on the extracellular side. Residues 115 to 137 (VHMQLMEVFYSVTMAARIAYSSY) form a helical membrane-spanning segment. Residues Glu-121 and Arg-131 each coordinate folate. The Cytoplasmic segment spans residues 138 to 151 (IFSLVRPSRYQRMA). The helical transmembrane segment at 152–176 (SYSRAAVLLGVFTSSVLGQVLWPLE) threads the bilayer. Residue Val-162 participates in folate binding. Residues 177–181 (QKSQN) are Extracellular-facing. The helical transmembrane segment at 182–200 (SNMLNYISLGFIIFSLGLS) threads the bilayer. At 201–266 (LFLKRPKHSL…LSELVGNLRQ (66 aa)) the chain is on the cytoplasmic side. The helical transmembrane segment at 267 to 292 (PQLRLWCLWWVFNSAGYYLIVYYVHV) threads the bilayer. Folate is bound by residues Ala-281, Gly-282, and Ile-286. The Extracellular segment spans residues 293–300 (LWSIDKNL). A helical transmembrane segment spans residues 301-323 (NYNGAVDAASTLLSAITSFSAGF). Over 324-329 (VKIRWA) the chain is Cytoplasmic. A helical transmembrane segment spans residues 330–350 (LWSKLVIASVIAIQAGLVFCM). Residues 351–353 (YMV) are Extracellular-facing. Residues 354 to 377 (HYVTWVHKIWVLYMTYVLFRGAYQ) traverse the membrane as a helical segment. Folate contacts are provided by Tyr-366 and Val-370. Residues 378-391 (FLVPIATFQIASSL) lie on the Cytoplasmic side of the membrane. A helical membrane pass occupies residues 392–415 (SKELCALVFGINTFLATALKTAIT). The required for substrate-binding stretch occupies residues 407-419 (ATALKTAITLVVS). Over 416-423 (LVVSDKRG) the chain is Extracellular. A helical membrane pass occupies residues 424 to 448 (LGLKVEKQFCIYSVYFMVLSVICFV). Residues 449 to 512 (GAVLDGVRYC…DGVEDSEASL (64 aa)) are Cytoplasmic-facing. Phosphoserine is present on residues Ser-473, Ser-478, and Ser-483. A disordered region spans residues 480 to 518 (QVPSMQDGGLGGLQPSAPQLLPEDGVEDSEASLRAEAKA).

The protein belongs to the reduced folate carrier (RFC) transporter (TC 2.A.48) family.

The protein localises to the cell membrane. The protein resides in the apical cell membrane. Its subcellular location is the basolateral cell membrane. It carries out the reaction 5-amino-1-(5-phospho-beta-D-ribosyl)imidazole-4-carboxamide(in) + (6S)-5-methyl-5,6,7,8-tetrahydrofolate(out) = 5-amino-1-(5-phospho-beta-D-ribosyl)imidazole-4-carboxamide(out) + (6S)-5-methyl-5,6,7,8-tetrahydrofolate(in). Functionally, antiporter that mediates the import of reduced folates, driven by the export of organic anions. Also acts as an importer of immunoreactive cyclic dinucleotides, but with a lower transporter activity. Mechanistically, acts as a secondary active transporter, which exports intracellular organic anions down their concentration gradients to facilitate the uptake of its substrates. Has high affinity for N5-methyltetrahydrofolate, the predominant circulating form of folate. Also mediates the import of antifolate drug methotrexate. 5-amino-4-imidazolecarboxamide riboside (AICAR), when phosphorylated to AICAR monophosphate, can serve as an organic anion for antiporter activity. This is Reduced folate transporter from Cricetulus griseus (Chinese hamster).